A 429-amino-acid chain; its full sequence is Adenylosuccinate synthetase (429 aa).

Residues 12–18 and 40–42 each bind GTP; these read GDEGKGK and GHT. The active-site Proton acceptor is Asp-13. Residues Asp-13 and Gly-40 each coordinate Mg(2+). Residues 13 to 16, 38 to 41, Thr-128, Arg-142, Gln-223, Thr-238, and Arg-302 each bind IMP; these read DEGK and NAGH. Residue His-41 is the Proton donor of the active site. Residue 298-304 participates in substrate binding; that stretch reads TTTGRPR. GTP-binding positions include Arg-304, 330–332, and 412–414; these read SID and SVG.

This sequence belongs to the adenylosuccinate synthetase family. As to quaternary structure, homodimer. The cofactor is Mg(2+).

It localises to the cytoplasm. It catalyses the reaction IMP + L-aspartate + GTP = N(6)-(1,2-dicarboxyethyl)-AMP + GDP + phosphate + 2 H(+). The protein operates within purine metabolism; AMP biosynthesis via de novo pathway; AMP from IMP: step 1/2. Its function is as follows. Plays an important role in the de novo pathway of purine nucleotide biosynthesis. Catalyzes the first committed step in the biosynthesis of AMP from IMP. This is Adenylosuccinate synthetase from Bacillus cereus (strain ZK / E33L).